A 151-amino-acid polypeptide reads, in one-letter code: Putative truncated GMC-type inactive oxidoreductase L893 (151 aa).

Belongs to the GMC oxidoreductase family.

It is found in the virion. The polypeptide is Putative truncated GMC-type inactive oxidoreductase L893 (Acanthamoeba polyphaga (Amoeba)).